Consider the following 156-residue polypeptide: ATP synthase subunit b (156 aa).

The chain crosses the membrane as a helical span at residues 7–29 (LIGQSVAFLIFVWFCMKFVWPPL).

This sequence belongs to the ATPase B chain family. As to quaternary structure, F-type ATPases have 2 components, F(1) - the catalytic core - and F(0) - the membrane proton channel. F(1) has five subunits: alpha(3), beta(3), gamma(1), delta(1), epsilon(1). F(0) has three main subunits: a(1), b(2) and c(10-14). The alpha and beta chains form an alternating ring which encloses part of the gamma chain. F(1) is attached to F(0) by a central stalk formed by the gamma and epsilon chains, while a peripheral stalk is formed by the delta and b chains.

The protein resides in the cell inner membrane. F(1)F(0) ATP synthase produces ATP from ADP in the presence of a proton or sodium gradient. F-type ATPases consist of two structural domains, F(1) containing the extramembraneous catalytic core and F(0) containing the membrane proton channel, linked together by a central stalk and a peripheral stalk. During catalysis, ATP synthesis in the catalytic domain of F(1) is coupled via a rotary mechanism of the central stalk subunits to proton translocation. In terms of biological role, component of the F(0) channel, it forms part of the peripheral stalk, linking F(1) to F(0). This is ATP synthase subunit b from Shewanella denitrificans (strain OS217 / ATCC BAA-1090 / DSM 15013).